The sequence spans 513 residues: GMP synthase [glutamine-hydrolyzing] (513 aa).

In terms of domain architecture, Glutamine amidotransferase type-1 spans 3–200; that stretch reads SVTVLDFGSQ…LIDIAGIKPD (198 aa). Catalysis depends on C80, which acts as the Nucleophile. Catalysis depends on residues H174 and E176. The GMPS ATP-PPase domain occupies 201-388; that stretch reads WSPKSFIGHQ…LGIAEDILMR (188 aa). 228–234 lines the ATP pocket; sequence SGGVDST.

In terms of assembly, homodimer.

It carries out the reaction XMP + L-glutamine + ATP + H2O = GMP + L-glutamate + AMP + diphosphate + 2 H(+). Its pathway is purine metabolism; GMP biosynthesis; GMP from XMP (L-Gln route): step 1/1. In terms of biological role, catalyzes the synthesis of GMP from XMP. This chain is GMP synthase [glutamine-hydrolyzing], found in Chlorobium phaeobacteroides (strain DSM 266 / SMG 266 / 2430).